Reading from the N-terminus, the 353-residue chain is Photosystem II D2 protein (353 aa).

Threonine 2 carries the N-acetylthreonine modification. Position 2 is a phosphothreonine (threonine 2). Residues cysteine 41–threonine 61 traverse the membrane as a helical segment. Residue histidine 118 coordinates chlorophyll a. A helical membrane pass occupies residues glycine 125 to proline 141. Residues glutamine 130 and asparagine 143 each contribute to the pheophytin a site. Residues valine 153 to serine 166 form a helical membrane-spanning segment. Histidine 198 contacts chlorophyll a. The chain crosses the membrane as a helical span at residues alanine 208–aspartate 228. The a plastoquinone site is built by histidine 215 and phenylalanine 262. A Fe cation-binding site is contributed by histidine 215. Histidine 269 is a Fe cation binding site. The helical transmembrane segment at glycine 279–arginine 295 threads the bilayer.

The protein belongs to the reaction center PufL/M/PsbA/D family. PSII is composed of 1 copy each of membrane proteins PsbA, PsbB, PsbC, PsbD, PsbE, PsbF, PsbH, PsbI, PsbJ, PsbK, PsbL, PsbM, PsbT, PsbX, PsbY, PsbZ, Psb30/Ycf12, at least 3 peripheral proteins of the oxygen-evolving complex and a large number of cofactors. It forms dimeric complexes. It depends on The D1/D2 heterodimer binds P680, chlorophylls that are the primary electron donor of PSII, and subsequent electron acceptors. It shares a non-heme iron and each subunit binds pheophytin, quinone, additional chlorophylls, carotenoids and lipids. There is also a Cl(-1) ion associated with D1 and D2, which is required for oxygen evolution. The PSII complex binds additional chlorophylls, carotenoids and specific lipids. as a cofactor.

The protein localises to the plastid. Its subcellular location is the chloroplast thylakoid membrane. It carries out the reaction 2 a plastoquinone + 4 hnu + 2 H2O = 2 a plastoquinol + O2. Photosystem II (PSII) is a light-driven water:plastoquinone oxidoreductase that uses light energy to abstract electrons from H(2)O, generating O(2) and a proton gradient subsequently used for ATP formation. It consists of a core antenna complex that captures photons, and an electron transfer chain that converts photonic excitation into a charge separation. The D1/D2 (PsbA/PsbD) reaction center heterodimer binds P680, the primary electron donor of PSII as well as several subsequent electron acceptors. D2 is needed for assembly of a stable PSII complex. This is Photosystem II D2 protein from Staurastrum punctulatum (Green alga).